Consider the following 245-residue polypeptide: MGGQKTHFGFSTVNEDEKAGKVAEVFHSVAKNYDIMNDVMSAGLHRVWKHFTINTAHLKKGDKVLDIAGGTGDLSRGWAKRVGKEGEVWLTDINSSMLTVGRDRLLNEGMILPVSLADAEKLPFPDNYFNLVSVAFGLRNMTHKDAALKEMYRVLKPGGTLLVLEFSKIYKPLEGAYDFYSFKLLPAMGRLIAKDAESYQYLAESIRMHPDQETLKQMMLDAGFDSVDYHNMSAGIVALHKGVKF.

Residues Thr-71, Asp-92, and 118-119 (DA) each bind S-adenosyl-L-methionine.

This sequence belongs to the class I-like SAM-binding methyltransferase superfamily. MenG/UbiE family.

It catalyses the reaction a 2-demethylmenaquinol + S-adenosyl-L-methionine = a menaquinol + S-adenosyl-L-homocysteine + H(+). It carries out the reaction a 2-methoxy-6-(all-trans-polyprenyl)benzene-1,4-diol + S-adenosyl-L-methionine = a 5-methoxy-2-methyl-3-(all-trans-polyprenyl)benzene-1,4-diol + S-adenosyl-L-homocysteine + H(+). It participates in quinol/quinone metabolism; menaquinone biosynthesis; menaquinol from 1,4-dihydroxy-2-naphthoate: step 2/2. Its pathway is cofactor biosynthesis; ubiquinone biosynthesis. Methyltransferase required for the conversion of demethylmenaquinol (DMKH2) to menaquinol (MKH2) and the conversion of 2-polyprenyl-6-methoxy-1,4-benzoquinol (DDMQH2) to 2-polyprenyl-3-methyl-6-methoxy-1,4-benzoquinol (DMQH2). The chain is Ubiquinone/menaquinone biosynthesis C-methyltransferase UbiE from Neisseria meningitidis serogroup A / serotype 4A (strain DSM 15465 / Z2491).